A 79-amino-acid polypeptide reads, in one-letter code: MFVKTGDKVKVIAGKDKGKEGTVLSVNAKTNRIVVKGVNKIKKHEKPSQTNANGGVVEKEGSIHASNVKVIAKKEDNNK.

It belongs to the universal ribosomal protein uL24 family. In terms of assembly, part of the 50S ribosomal subunit.

Its function is as follows. One of two assembly initiator proteins, it binds directly to the 5'-end of the 23S rRNA, where it nucleates assembly of the 50S subunit. Functionally, one of the proteins that surrounds the polypeptide exit tunnel on the outside of the subunit. The chain is Large ribosomal subunit protein uL24 from Lactobacillus johnsonii (strain CNCM I-12250 / La1 / NCC 533).